Reading from the N-terminus, the 226-residue chain is Ribosomal RNA large subunit methyltransferase E (226 aa).

5 residues coordinate S-adenosyl-L-methionine: glycine 82, tryptophan 84, aspartate 100, aspartate 116, and aspartate 140. Residue lysine 180 is the Proton acceptor of the active site.

It belongs to the class I-like SAM-binding methyltransferase superfamily. RNA methyltransferase RlmE family.

Its subcellular location is the cytoplasm. The catalysed reaction is uridine(2552) in 23S rRNA + S-adenosyl-L-methionine = 2'-O-methyluridine(2552) in 23S rRNA + S-adenosyl-L-homocysteine + H(+). Its function is as follows. Specifically methylates the uridine in position 2552 of 23S rRNA at the 2'-O position of the ribose in the fully assembled 50S ribosomal subunit. This is Ribosomal RNA large subunit methyltransferase E from Caulobacter sp. (strain K31).